Here is a 539-residue protein sequence, read N- to C-terminus: D-mannonate oxidoreductase (539 aa).

An NAD(+)-binding site is contributed by Trp-39 to Gly-50.

It belongs to the mannitol dehydrogenase family. UxuB subfamily.

It catalyses the reaction D-mannonate + NAD(+) = keto-D-fructuronate + NADH + H(+). It functions in the pathway carbohydrate metabolism. Functionally, catalyzes the reduction of D-fructuronate (D-FruA) to D-mannonate (D-ManA). The protein is D-mannonate oxidoreductase of Thermotoga maritima (strain ATCC 43589 / DSM 3109 / JCM 10099 / NBRC 100826 / MSB8).